The chain runs to 588 residues: L-fucose isomerase (588 aa).

Active-site proton acceptor residues include Glu335 and Asp359. Residues Glu335, Asp359, and His525 each coordinate Mn(2+).

The protein belongs to the L-fucose isomerase family. The cofactor is Mn(2+).

The protein resides in the cytoplasm. The catalysed reaction is L-fucose = L-fuculose. It functions in the pathway carbohydrate degradation; L-fucose degradation; L-lactaldehyde and glycerone phosphate from L-fucose: step 1/3. In terms of biological role, converts the aldose L-fucose into the corresponding ketose L-fuculose. The chain is L-fucose isomerase from Streptococcus pneumoniae (strain P1031).